The sequence spans 119 residues: Large ribosomal subunit protein uL18 (119 aa).

Belongs to the universal ribosomal protein uL18 family. Part of the 50S ribosomal subunit; part of the 5S rRNA/L5/L18/L25 subcomplex. Contacts the 5S and 23S rRNAs.

In terms of biological role, this is one of the proteins that bind and probably mediate the attachment of the 5S RNA into the large ribosomal subunit, where it forms part of the central protuberance. The chain is Large ribosomal subunit protein uL18 from Desulfovibrio desulfuricans (strain ATCC 27774 / DSM 6949 / MB).